The following is a 196-amino-acid chain: FAD-linked sulfhydryl oxidase ERV2 (196 aa).

The Cytoplasmic portion of the chain corresponds to 1 to 12 (MKQIVKRSHAIR). The helical; Signal-anchor transmembrane segment at 13–35 (IVAALGIIGLWMFFSSNELSIAT) threads the bilayer. Residues 36-196 (PGLIKAKSGI…SLEKEAKQHG (161 aa)) lie on the Lumenal side of the membrane. The 103-residue stretch at 72 to 174 (MGDDKVKKEV…YDCATILEDY (103 aa)) folds into the ERV/ALR sulfhydryl oxidase domain. Positions 78, 83, and 86 each coordinate FAD. C121 and C124 are disulfide-bonded. Positions 127, 150, 153, 157, 162, and 174 each coordinate FAD. C150 and C167 are joined by a disulfide. C176 and C178 are joined by a disulfide.

In terms of assembly, homodimer. Interacts with the substrate protein PDI1, forming transient intermolecular disulfide bridges. FAD serves as cofactor.

The protein localises to the endoplasmic reticulum membrane. The enzyme catalyses 2 R'C(R)SH + O2 = R'C(R)S-S(R)CR' + H2O2. FAD-dependent sulfhydryl oxidase that catalyzes disulfide bond formation in the endoplasmic reticulum lumen in parallel to ERO1. This is FAD-linked sulfhydryl oxidase ERV2 (ERV2) from Saccharomyces cerevisiae (strain ATCC 204508 / S288c) (Baker's yeast).